Here is a 70-residue protein sequence, read N- to C-terminus: Large ribosomal subunit protein bL32 (70 aa).

Residues 1–19 (MAVPKKKTSPSRRGMRRSH) show a composition bias toward basic residues. The segment at 1–21 (MAVPKKKTSPSRRGMRRSHQA) is disordered.

This sequence belongs to the bacterial ribosomal protein bL32 family.

The polypeptide is Large ribosomal subunit protein bL32 (Granulibacter bethesdensis (strain ATCC BAA-1260 / CGDNIH1)).